We begin with the raw amino-acid sequence, 729 residues long: Polyribonucleotide nucleotidyltransferase (729 aa).

2 residues coordinate Mg(2+): Asp485 and Asp491. The 60-residue stretch at 552–611 (PRITTMKVAEDKIRTIIGKGGATIKGLIESTGVSIDIDDSGVVQLFSPDKMALEEAQKQI) folds into the KH domain. Residues 621-689 (GQTYQGKVSK…KQGRVKLEWK (69 aa)) enclose the S1 motif domain.

It belongs to the polyribonucleotide nucleotidyltransferase family. Component of the RNA degradosome, which is a multiprotein complex involved in RNA processing and mRNA degradation. It depends on Mg(2+) as a cofactor.

The protein resides in the cytoplasm. The catalysed reaction is RNA(n+1) + phosphate = RNA(n) + a ribonucleoside 5'-diphosphate. Involved in mRNA degradation. Catalyzes the phosphorolysis of single-stranded polyribonucleotides processively in the 3'- to 5'-direction. The chain is Polyribonucleotide nucleotidyltransferase from Legionella pneumophila subsp. pneumophila (strain Philadelphia 1 / ATCC 33152 / DSM 7513).